Consider the following 178-residue polypeptide: Neuroblastoma suppressor of tumorigenicity 1 (178 aa).

A signal peptide spans 1-16; that stretch reads MLWVLVGAVLPVMLLA. 5 cysteine pairs are disulfide-bonded: Cys34–Cys84, Cys48–Cys98, Cys58–Cys117, Cys62–Cys119, and Cys81–Cys122. The CTCK domain maps to 34-123; that stretch reads CEAKNITQIV…IVHCSCQACG (90 aa). Positions 132–178 are disordered; it reads NVYVQGEDSPGSQPGPHSHAHPHPGGQTPEPEEPPGAPQVEEEGAED. Residues 140–160 show a composition bias toward low complexity; it reads SPGSQPGPHSHAHPHPGGQTP.

It belongs to the DAN family. As to quaternary structure, homodimer.

It is found in the secreted. Its function is as follows. Possible candidate as a tumor suppressor gene of neuroblastoma. May play an important role in preventing cells from entering the final stage (G1/S) of the transformation process. In Mus musculus (Mouse), this protein is Neuroblastoma suppressor of tumorigenicity 1 (Nbl1).